An 87-amino-acid chain; its full sequence is Potassium channel toxin Ttr-beta-KTx (87 aa).

Positions Met-1–Cys-19 are cleaved as a signal peptide. A propeptide spanning residues Gly-20 to Gln-27 is cleaved from the precursor. Residues Gln-53 to Asp-87 enclose the BetaSPN-type CS-alpha/beta domain. 3 cysteine pairs are disulfide-bonded: Cys-56/Cys-77, Cys-63/Cys-82, and Cys-67/Cys-84.

The protein belongs to the long chain scorpion toxin family. Class 1 subfamily. As to expression, expressed by the venom gland.

It is found in the secreted. Its function is as follows. Inhibits voltage-gated potassium channel. This Tityus trivittatus (Argentinean scorpion) protein is Potassium channel toxin Ttr-beta-KTx.